Consider the following 197-residue polypeptide: Chromophore lyase CpcT/CpeT (197 aa).

The protein belongs to the CpcT/CpeT biliprotein lyase family.

In terms of biological role, covalently attaches a chromophore to Cys residue(s) of phycobiliproteins. The protein is Chromophore lyase CpcT/CpeT of Synechococcus sp. (strain WH8103).